Here is a 382-residue protein sequence, read N- to C-terminus: C-type lectin domain-containing protein 38 (382 aa).

The Cytoplasmic portion of the chain corresponds to 1–40; that stretch reads MAIFYDDPLERLNQPIKTKSYRKKQVVQRVHVFIFDNWKL. The chain crosses the membrane as a helical span at residues 41–61; it reads ILLGILNLIFLIIAIVFAILF. The Extracellular portion of the chain corresponds to 62–382; that stretch reads FVGSADCAQL…FFLCKRAIDF (321 aa). The interval 97–116 is disordered; that stretch reads NAITTTQGTPSNKTSTTTPS. Residues 100–116 show a composition bias toward low complexity; that stretch reads TTTQGTPSNKTSTTTPS. 2 N-linked (GlcNAc...) asparagine glycosylation sites follow: asparagine 108 and asparagine 189. C-type lectin domains are found at residues 129–250 and 264–377; these read VGTK…FVCE and YNKN…FLCK. Cystine bridges form between cysteine 150–cysteine 249, cysteine 223–cysteine 241, cysteine 285–cysteine 376, and cysteine 348–cysteine 368.

In terms of tissue distribution, expressed in ventral cord motor neurons and PLM touch neurons.

Its subcellular location is the membrane. Involved in negative modulation of unc-40-mediated axon outgrowth. Required for proper presynaptic development in axons that have reached their targets. May function in concert with E3 ubiquitin-protein ligase rpm-1 in regulating axon outgrowth. The protein is C-type lectin domain-containing protein 38 of Caenorhabditis elegans.